Here is a 275-residue protein sequence, read N- to C-terminus: Monooxygenase af470 (275 aa).

The catalysed reaction is prefumagillin + NADPH + 2 O2 = fumagillin + acetaldehyde + NADP(+) + H2O. It functions in the pathway secondary metabolite biosynthesis; terpenoid biosynthesis. Monooxygenase; part of the gene cluster that mediates the biosynthesis of fumagillin, a meroterpenoid that has numerous biological activities including irreversible inhibition of human type 2 methionine aminopeptidase (METAP2). Within the pathway, the monooxygenase af470 catalyzes the oxidative cleavage of prefumagillin to yield the final compound of the pathway, fumagillin. The pathway begins with the conversion of farnesyl pyrophosphate (FPP) to beta-trans-bergamotene by the membrane-bound beta-trans-bergamotene synthase af520. The multifunctional cytochrome P450 monooxygenase af510 then converts beta-trans-bergamotene into 5-keto-demethoxyfumagillol via several oxydation steps. 5-keto-demethoxyfumagillol is then subjected to successive C-6 hydroxylation and O-methylation by the dioxygenase af480 and O-methyltransferase af390-400, respectively, to yield 5-keto-fumagillol, which is then stereoselectively reduced by the keto-reductase af490 to 5R-hydroxy-seco-sesquiterpene. The next step is the polyketide transferase af380-catalyzed transfer of a dodecapentaenoyl group synthesized by the polyketide synthase af370 onto 5R-hydroxy-seco-sesquiterpene which leads to the production of prefumagillin. Finally, oxidative cleavage by the monooxygenase af470 converts prefumagillin to fumagillin. This Aspergillus fumigatus (strain ATCC MYA-4609 / CBS 101355 / FGSC A1100 / Af293) (Neosartorya fumigata) protein is Monooxygenase af470.